A 453-amino-acid polypeptide reads, in one-letter code: Tryptophan dimethylallyltransferase cnsF (453 aa).

L-tryptophan contacts are provided by residues 84–85 (IL) and Glu93. 3 residues coordinate substrate: Arg104, Lys190, and Tyr192. Residues Tyr194 and Arg248 each coordinate L-tryptophan. The substrate site is built by Arg261, Lys263, Tyr265, Gln347, and Tyr349.

This sequence belongs to the tryptophan dimethylallyltransferase family. As to quaternary structure, homodimer.

It carries out the reaction L-tryptophan + dimethylallyl diphosphate = 4-(3-methylbut-2-enyl)-L-tryptophan + diphosphate. It participates in alkaloid biosynthesis. Tryptophan dimethylallyltransferase; part of the gene cluster that mediates the biosynthesis of communesins, a prominent class of indole alkaloids with great potential as pharmaceuticals. Communesins are biosynthesized by the coupling of tryptamine and aurantioclavine, two building blocks derived from L-tryptophan. The L-tryptophan decarboxylase cnsB converts L-tryptophan to tryptamine, whereas the tryptophan dimethylallyltransferase cnsF converts L-tryptophan to 4-dimethylallyl tryptophan which is further transformed to aurantioclavine by the aurantioclavine synthase cnsA, probably aided by the catalase cnsD. The cytochrome P450 monooxygenase cnsC catalyzes the heterodimeric coupling between the two different indole moieties, tryptamine and aurantioclavine, to construct vicinal quaternary stereocenters and yield the heptacyclic communesin scaffold. The O-methyltransferase cnsE then methylates the communesin scaffold to produce communesin K, the simplest characterized communesin that contains the heptacyclic core. The dioxygenase cnsJ converts communesin K into communesin I. Acylation to introduce the hexadienyl group at position N16 of communesin I by the acyltransferase cnsK leads to the production of communesin B. The hexadienyl group is produced by the highly reducing polyketide synthase cnsI, before being hydrolytically removed from cnsI by the serine hydrolase cnsH, converted into hexadienyl-CoA by the CoA ligase cnsG, and then transferred to communesin I by cnsK. Surprisingly, cnsK may also be a promiscuous acyltransferase that can tolerate a range of acyl groups, including acetyl-, propionyl-, and butyryl-CoA, which lead to communesins A, G and H respectively. The roles of the alpha-ketoglutarate-dependent dioxygenases cnsM and cnsP have still to be determined. The protein is Tryptophan dimethylallyltransferase cnsF of Penicillium expansum (Blue mold rot fungus).